The primary structure comprises 244 residues: rRNA adenine N-6-methyltransferase (244 aa).

S-adenosyl-L-methionine contacts are provided by Asn-11, Ile-13, Gly-38, Glu-59, Asp-84, and Asn-101.

It belongs to the class I-like SAM-binding methyltransferase superfamily. rRNA adenine N(6)-methyltransferase family.

It carries out the reaction adenosine(2085) in 23S rRNA + 2 S-adenosyl-L-methionine = N(6)-dimethyladenosine(2085) in 23S rRNA + 2 S-adenosyl-L-homocysteine + 2 H(+). This protein produces a dimethylation of the adenine residue at position 2085 in 23S rRNA, resulting in reduced affinity between ribosomes and macrolide-lincosamide-streptogramin B antibiotics. The chain is rRNA adenine N-6-methyltransferase (ermC') from Bacillus subtilis.